A 39-amino-acid chain; its full sequence is Photosystem II reaction center protein L (39 aa).

A helical transmembrane segment spans residues 18 to 38 (SLYLGLLLVFVTGVLFSSYFF).

This sequence belongs to the PsbL family. In terms of assembly, PSII is composed of 1 copy each of membrane proteins PsbA, PsbB, PsbC, PsbD, PsbE, PsbF, PsbH, PsbI, PsbJ, PsbK, PsbL, PsbM, PsbT, PsbX, PsbY, PsbZ, Psb30/Ycf12, peripheral proteins PsbO, CyanoQ (PsbQ), PsbU, PsbV and a large number of cofactors. It forms dimeric complexes.

It is found in the cellular thylakoid membrane. Its function is as follows. One of the components of the core complex of photosystem II (PSII). PSII is a light-driven water:plastoquinone oxidoreductase that uses light energy to abstract electrons from H(2)O, generating O(2) and a proton gradient subsequently used for ATP formation. It consists of a core antenna complex that captures photons, and an electron transfer chain that converts photonic excitation into a charge separation. This subunit is found at the monomer-monomer interface and is required for correct PSII assembly and/or dimerization. The chain is Photosystem II reaction center protein L from Synechococcus sp. (strain RCC307).